Reading from the N-terminus, the 412-residue chain is L-threonine:uridine-5'-aldehyde transaldolase (412 aa).

At lysine 229 the chain carries N6-(pyridoxal phosphate)lysine.

This sequence belongs to the SHMT family. It depends on pyridoxal 5'-phosphate as a cofactor.

It carries out the reaction uridine-5'-aldehyde + L-threonine = (5'S,6'S)-C-glycyluridine + acetaldehyde. The protein operates within antibiotic biosynthesis. Transaldolase involved in the biosynthesis of the capuramycin-type nucleoside antibiotic A-503083. Catalyzes the condensation of L-threonine and uridine-5'-aldehyde to form 5'-C-glycyluridine (GlyU). Forms (5'S,6'S)-GlyU. The protein is L-threonine:uridine-5'-aldehyde transaldolase of Streptomyces sp.